The following is a 490-amino-acid chain: Katanin p60 ATPase-containing subunit A-like 1 (490 aa).

An N-acetylmethionine modification is found at Met1. Positions 95–178 (DPAVWPPPVP…MQDGASDGDI (84 aa)) are disordered. A compositionally biased stretch (basic and acidic residues) spans 116–127 (PNREVRPLRKDV). A compositionally biased stretch (low complexity) spans 128–139 (AGVGARGPVGRA). A compositionally biased stretch (basic and acidic residues) spans 143-169 (SKSEKPSTNKDKDYRARGRDDKGRKNM). Ser174 carries the phosphoserine modification. Position 248–255 (248–255 (GPPGTGKT)) interacts with ATP.

It belongs to the AAA ATPase family. Katanin p60 subunit A1 subfamily. A-like 1 sub-subfamily. In terms of assembly, interacts with KATNB1 and KATNBL1.

It localises to the cytoplasm. Its subcellular location is the cytoskeleton. The protein localises to the spindle pole. It is found in the spindle. It catalyses the reaction n ATP + n H2O + a microtubule = n ADP + n phosphate + (n+1) alpha/beta tubulin heterodimers.. Functionally, regulates microtubule dynamics in Sertoli cells, a process that is essential for spermiogenesis and male fertility. Severs microtubules in an ATP-dependent manner, promoting rapid reorganization of cellular microtubule arrays. Has microtubule-severing activity in vitro. This is Katanin p60 ATPase-containing subunit A-like 1 from Sorex araneus (Eurasian common shrew).